A 324-amino-acid chain; its full sequence is Melanoma-associated antigen B16 (324 aa).

A compositionally biased stretch (basic and acidic residues) spans 1–15 (MSQDQESPRCTHDQH). Disordered stretches follow at residues 1-22 (MSQD…FSET) and 39-108 (LSSS…PRNV). The span at 70-81 (SSSIAVTTTSSS) shows a compositional bias: low complexity. Positions 82 to 95 (ESDEASSNQEEEDS) are enriched in acidic residues. An MAGE domain is found at 113 to 312 (LDQKVAFLVN…HSFPSQYAEA (200 aa)).

The sequence is that of Melanoma-associated antigen B16 (MAGEB16) from Homo sapiens (Human).